The chain runs to 154 residues: 3-hydroxyacyl-[acyl-carrier-protein] dehydratase FabZ (154 aa).

His-60 is a catalytic residue.

Belongs to the thioester dehydratase family. FabZ subfamily.

Its subcellular location is the cytoplasm. The catalysed reaction is a (3R)-hydroxyacyl-[ACP] = a (2E)-enoyl-[ACP] + H2O. Its function is as follows. Involved in unsaturated fatty acids biosynthesis. Catalyzes the dehydration of short chain beta-hydroxyacyl-ACPs and long chain saturated and unsaturated beta-hydroxyacyl-ACPs. This Synechococcus sp. (strain CC9311) protein is 3-hydroxyacyl-[acyl-carrier-protein] dehydratase FabZ.